Reading from the N-terminus, the 420-residue chain is GDP-mannose transporter 2 (420 aa).

Residues 1-11 (MASYTPSSSRP) show a composition bias toward polar residues. The segment at 1–21 (MASYTPSSSRPHTPLGLSPRG) is disordered. Residues 1–76 (MASYTPSSSR…KAKKEEVCMP (76 aa)) are Cytoplasmic-facing. The helical transmembrane segment at 77–97 (ASTTVLPILSYCVASIMMTVV) threads the bilayer. Topologically, residues 98–106 (NKFVVSGRQ) are lumenal. A helical transmembrane segment spans residues 107-127 (FTMTFLLLAIQSFVCVACVWL). Topologically, residues 128–145 (AKRIGVINFRDWDMNDAK) are cytoplasmic. Residues 146–168 (AWFPVSSLLVAVIYTGSKSLQFL) form a helical membrane-spanning segment. Topologically, residues 169 to 171 (SIP) are lumenal. The chain crosses the membrane as a helical span at residues 172-194 (VYTIFKNLTIILIAYGEVIWFGG). Residues 195–200 (HVTPLT) lie on the Cytoplasmic side of the membrane. The helical transmembrane segment at 201–223 (LCSFFLMVGSSVIAAWADISTTL) threads the bilayer. Residues 224-251 (SKLSAGVAVVDPISGADVPLSSISVMDT) lie on the Lumenal side of the membrane. Residues 252-272 (MNVGYLWMFINCLASAGYVLF) traverse the membrane as a helical segment. Over 273–293 (MRKRIKVTGFKDWDSMFYNNL) the chain is Cytoplasmic. A helical membrane pass occupies residues 294–314 (LSIPVLFVFSLIIEDWGAASF). Residues 315–323 (SRNFPEEGR) are Lumenal-facing. A helical transmembrane segment spans residues 324-344 (AFLLSAIAFSGAAAVFISYST). At 345 to 355 (AWCVRICGATT) the chain is on the cytoplasmic side. Residues 356–376 (YSLVGALNKLPVAASGILFFG) traverse the membrane as a helical segment. Residues 377-378 (DP) lie on the Lumenal side of the membrane. Residues 379–399 (VNFGNVSAILVGGVSGIVYAV) traverse the membrane as a helical segment. Residues 400-420 (AKTNQAKVEKSKQARGGESKA) are Cytoplasmic-facing.

Belongs to the TPT transporter family. SLC35D subfamily. As to quaternary structure, homooligomer.

Its subcellular location is the golgi apparatus membrane. The protein localises to the cytoplasmic vesicle membrane. The protein resides in the endoplasmic reticulum membrane. Involved in the import of GDP-mannose from the cytoplasm into the Golgi lumen. The sequence is that of GDP-mannose transporter 2 (GMT2) from Cryptococcus neoformans var. neoformans serotype D (strain B-3501A) (Filobasidiella neoformans).